The sequence spans 619 residues: Hypermethylated in cancer 2 protein (619 aa).

The 64-residue stretch at 46–109 folds into the BTB domain; it reads CDVIIMVENS…IYTGKLLPSD (64 aa). Phosphoserine is present on residues serine 166, serine 169, and serine 197. Disordered regions lie at residues 180 to 293 and 307 to 426; these read DVRK…VGNS and MDVE…GHTG. A compositionally biased stretch (gly residues) spans 214-228; that stretch reads LGLGGPAGGEMGLGG. A binding to CtBP region spans residues 247–249; sequence DLS. Polar residues predominate over residues 281-293; sequence APTSTSALPVGNS. Over residues 337-357 the composition is skewed to basic and acidic residues; it reads KKDWNKKEPVAGSPFDRRETG. Serine 349 and serine 416 each carry phosphoserine. 5 consecutive C2H2-type zinc fingers follow at residues 446-468, 509-531, 537-559, 565-587, and 593-615; these read YVCI…VETH, FKCS…EKTH, FPCN…MRSH, FACD…MRVH, and YECQ…LRMH.

This sequence belongs to the krueppel C2H2-type zinc-finger protein family. Hic subfamily. Self-associates. Interacts with HIC1.

It localises to the nucleus. In terms of biological role, transcriptional repressor. The chain is Hypermethylated in cancer 2 protein (Hic2) from Mus musculus (Mouse).